Reading from the N-terminus, the 480-residue chain is Protein nucleotidyltransferase YdiU (480 aa).

ATP contacts are provided by Gly-86, Gly-88, Arg-89, Lys-109, Asp-121, Gly-122, Arg-172, and Arg-179. The active-site Proton acceptor is Asp-248. Mg(2+)-binding residues include Asn-249 and Asp-258. Asp-258 provides a ligand contact to ATP.

This sequence belongs to the SELO family. It depends on Mg(2+) as a cofactor. The cofactor is Mn(2+).

The enzyme catalyses L-seryl-[protein] + ATP = 3-O-(5'-adenylyl)-L-seryl-[protein] + diphosphate. The catalysed reaction is L-threonyl-[protein] + ATP = 3-O-(5'-adenylyl)-L-threonyl-[protein] + diphosphate. It catalyses the reaction L-tyrosyl-[protein] + ATP = O-(5'-adenylyl)-L-tyrosyl-[protein] + diphosphate. It carries out the reaction L-histidyl-[protein] + UTP = N(tele)-(5'-uridylyl)-L-histidyl-[protein] + diphosphate. The enzyme catalyses L-seryl-[protein] + UTP = O-(5'-uridylyl)-L-seryl-[protein] + diphosphate. The catalysed reaction is L-tyrosyl-[protein] + UTP = O-(5'-uridylyl)-L-tyrosyl-[protein] + diphosphate. Functionally, nucleotidyltransferase involved in the post-translational modification of proteins. It can catalyze the addition of adenosine monophosphate (AMP) or uridine monophosphate (UMP) to a protein, resulting in modifications known as AMPylation and UMPylation. The polypeptide is Protein nucleotidyltransferase YdiU (Salmonella paratyphi A (strain ATCC 9150 / SARB42)).